The chain runs to 234 residues: 1-(5-phosphoribosyl)-5-[(5-phosphoribosylamino)methylideneamino] imidazole-4-carboxamide isomerase (234 aa).

Asp9 acts as the Proton acceptor in catalysis. Asp131 (proton donor) is an active-site residue.

This sequence belongs to the HisA/HisF family.

The protein localises to the cytoplasm. It catalyses the reaction 1-(5-phospho-beta-D-ribosyl)-5-[(5-phospho-beta-D-ribosylamino)methylideneamino]imidazole-4-carboxamide = 5-[(5-phospho-1-deoxy-D-ribulos-1-ylimino)methylamino]-1-(5-phospho-beta-D-ribosyl)imidazole-4-carboxamide. Its pathway is amino-acid biosynthesis; L-histidine biosynthesis; L-histidine from 5-phospho-alpha-D-ribose 1-diphosphate: step 4/9. The protein is 1-(5-phosphoribosyl)-5-[(5-phosphoribosylamino)methylideneamino] imidazole-4-carboxamide isomerase of Staphylococcus aureus (strain NCTC 8325 / PS 47).